Here is a 147-residue protein sequence, read N- to C-terminus: Hemoglobin subunit gamma-2 (147 aa).

In terms of domain architecture, Globin spans Asn-3–His-147. Thr-13 carries the post-translational modification Phosphothreonine. A phosphoserine mark is found at Ser-45, Ser-51, and Ser-53. Lys-60 carries the post-translational modification N6-acetyllysine. His-64 provides a ligand contact to heme b. The residue at position 83 (Lys-83) is an N6-acetyllysine. Residue His-93 coordinates heme b. Cys-94 carries the post-translational modification S-nitrosocysteine. Residues Ser-140 and Ser-144 each carry the phosphoserine modification.

The protein belongs to the globin family. Heterotetramer of two alpha chains and two gamma chains in fetal hemoglobin (Hb F). Red blood cells.

Gamma chains make up the fetal hemoglobin F, in combination with alpha chains. The sequence is that of Hemoglobin subunit gamma-2 (HBG2) from Cebus albifrons (White-fronted capuchin).